Here is a 422-residue protein sequence, read N- to C-terminus: Serine--tRNA ligase (422 aa).

229-231 (TAE) is an L-serine binding site. 258-260 (RRE) contacts ATP. Residue Glu281 participates in L-serine binding. 345 to 348 (EISS) provides a ligand contact to ATP. L-serine is bound at residue Ser379.

This sequence belongs to the class-II aminoacyl-tRNA synthetase family. Type-1 seryl-tRNA synthetase subfamily. In terms of assembly, homodimer. The tRNA molecule binds across the dimer.

The protein resides in the cytoplasm. It carries out the reaction tRNA(Ser) + L-serine + ATP = L-seryl-tRNA(Ser) + AMP + diphosphate + H(+). The enzyme catalyses tRNA(Sec) + L-serine + ATP = L-seryl-tRNA(Sec) + AMP + diphosphate + H(+). It functions in the pathway aminoacyl-tRNA biosynthesis; selenocysteinyl-tRNA(Sec) biosynthesis; L-seryl-tRNA(Sec) from L-serine and tRNA(Sec): step 1/1. Its function is as follows. Catalyzes the attachment of serine to tRNA(Ser). Is also able to aminoacylate tRNA(Sec) with serine, to form the misacylated tRNA L-seryl-tRNA(Sec), which will be further converted into selenocysteinyl-tRNA(Sec). The sequence is that of Serine--tRNA ligase from Methanosarcina mazei (strain ATCC BAA-159 / DSM 3647 / Goe1 / Go1 / JCM 11833 / OCM 88) (Methanosarcina frisia).